The following is a 227-amino-acid chain: Ion-translocating oxidoreductase complex subunit E (227 aa).

Transmembrane regions (helical) follow at residues 18–38 (ALVQ…VTNA), 39–59 (LGLG…VSLV), 69–89 (IPVF…LMNA), 93–113 (GLYL…IIIG), 125–145 (LPAV…LVLL), and 182–202 (HFLL…LIAL).

The protein belongs to the NqrDE/RnfAE family. The complex is composed of six subunits: RnfA, RnfB, RnfC, RnfD, RnfE and RnfG.

It is found in the cell inner membrane. Its function is as follows. Part of a membrane-bound complex that couples electron transfer with translocation of ions across the membrane. This chain is Ion-translocating oxidoreductase complex subunit E, found in Aliivibrio fischeri (strain MJ11) (Vibrio fischeri).